The following is a 170-amino-acid chain: Urease accessory protein UreE (170 aa).

This sequence belongs to the UreE family.

It localises to the cytoplasm. Functionally, involved in urease metallocenter assembly. Binds nickel. Probably functions as a nickel donor during metallocenter assembly. This Helicobacter pylori (strain G27) protein is Urease accessory protein UreE.